A 303-amino-acid chain; its full sequence is Acetylglutamate kinase (303 aa).

Substrate-binding positions include 67–68 (GG), Arg-89, and Asn-193.

It belongs to the acetylglutamate kinase family. ArgB subfamily.

It localises to the cytoplasm. It carries out the reaction N-acetyl-L-glutamate + ATP = N-acetyl-L-glutamyl 5-phosphate + ADP. The protein operates within amino-acid biosynthesis; L-arginine biosynthesis; N(2)-acetyl-L-ornithine from L-glutamate: step 2/4. In terms of biological role, catalyzes the ATP-dependent phosphorylation of N-acetyl-L-glutamate. The polypeptide is Acetylglutamate kinase (Acinetobacter baylyi (strain ATCC 33305 / BD413 / ADP1)).